A 309-amino-acid polypeptide reads, in one-letter code: Ubiquitin domain-containing protein UBFD1 (309 aa).

The tract at residues 1 to 80 (MAAAGAPDGM…VSNGEDAGGG (80 aa)) is disordered. Over residues 9 to 19 (GMEEPGMDTEA) the composition is skewed to acidic residues. Positions 35–57 (EAEAAAGAAAEDSGAARGSLQPA) are enriched in low complexity. A Ubiquitin-like domain is found at 84 to 159 (ELVDLKIIWN…IMVVGSTIND (76 aa)). The disordered stretch occupies residues 171 to 204 (QQDAKAEENKKEPLCRQKQHRKVLDKGKPEDVMP). Basic and acidic residues-rich tracts occupy residues 174-185 (AKAEENKKEPLC) and 192-201 (KVLDKGKPED).

Binds polyubiquitin.

Functionally, may play a role as NF-kappa-B regulator. This is Ubiquitin domain-containing protein UBFD1 (UBFD1) from Homo sapiens (Human).